The sequence spans 568 residues: PTS system lactose-specific EIICB component (568 aa).

In terms of domain architecture, PTS EIIC type-3 spans 8–409 (IEKGKPFFEK…LVDTVIYYPF (402 aa)). The next 10 membrane-spanning stretches (helical) occupy residues 30 to 50 (GFIS…IAYV), 65 to 85 (MLMT…AGTT), 103 to 123 (INFI…AADP), 128 to 148 (GFLS…AAFI), 183 to 203 (FAFS…VIGV), 222 to 242 (GYLG…VGIH), 246 to 266 (IVEP…AHLI), 283 to 303 (FIVT…FMWL), 339 to 359 (VFFI…KFFV), and 381 to 401 (IVLG…LILV). The 104-residue stretch at 465-568 (ETNVLVLCAG…LAFVEEQFKD (104 aa)) folds into the PTS EIIB type-3 domain. Cys472 functions as the Phosphocysteine intermediate; for EIIB activity in the catalytic mechanism. The residue at position 472 (Cys472) is a Phosphocysteine; by EIIA.

The protein localises to the cell membrane. It carries out the reaction lactose(out) + N(pros)-phospho-L-histidyl-[protein] = lactose 6-phosphate(in) + L-histidyl-[protein]. The phosphoenolpyruvate-dependent sugar phosphotransferase system (sugar PTS), a major carbohydrate active transport system, catalyzes the phosphorylation of incoming sugar substrates concomitantly with their translocation across the cell membrane. The enzyme II LacEF PTS system is involved in lactose transport. The polypeptide is PTS system lactose-specific EIICB component (Streptococcus mutans serotype c (strain ATCC 700610 / UA159)).